A 517-amino-acid chain; its full sequence is Light-independent protochlorophyllide reductase subunit B (517 aa).

Aspartate 36 lines the [4Fe-4S] cluster pocket. Catalysis depends on aspartate 285, which acts as the Proton donor. 420 to 421 (GL) is a binding site for substrate.

This sequence belongs to the ChlB/BchB/BchZ family. Protochlorophyllide reductase is composed of three subunits; BchL, BchN and BchB. Forms a heterotetramer of two BchB and two BchN subunits. Requires [4Fe-4S] cluster as cofactor.

It catalyses the reaction chlorophyllide a + oxidized 2[4Fe-4S]-[ferredoxin] + 2 ADP + 2 phosphate = protochlorophyllide a + reduced 2[4Fe-4S]-[ferredoxin] + 2 ATP + 2 H2O. It participates in porphyrin-containing compound metabolism; bacteriochlorophyll biosynthesis (light-independent). In terms of biological role, component of the dark-operative protochlorophyllide reductase (DPOR) that uses Mg-ATP and reduced ferredoxin to reduce ring D of protochlorophyllide (Pchlide) to form chlorophyllide a (Chlide). This reaction is light-independent. The NB-protein (BchN-BchB) is the catalytic component of the complex. This is Light-independent protochlorophyllide reductase subunit B from Bradyrhizobium sp. (strain BTAi1 / ATCC BAA-1182).